Reading from the N-terminus, the 238-residue chain is Dolichyldiphosphatase 1 (238 aa).

4 helical membrane passes run 33–53 (LAYL…LIIF), 100–120 (PSSH…FLYL), 130–150 (FLDL…AFLV), and 162–182 (WSQV…WFIF).

It belongs to the dolichyldiphosphatase family.

Its subcellular location is the endoplasmic reticulum membrane. It catalyses the reaction a di-trans,poly-cis-dolichyl diphosphate + H2O = a di-trans,poly-cis-dolichyl phosphate + phosphate + H(+). The protein operates within protein modification; protein glycosylation. Required for efficient N-glycosylation. Necessary for maintaining optimal levels of dolichol-linked oligosaccharides. Hydrolyzes dolichyl pyrophosphate at a very high rate and dolichyl monophosphate at a much lower rate. Does not act on phosphatidate. The polypeptide is Dolichyldiphosphatase 1 (DOLPP1) (Homo sapiens (Human)).